Reading from the N-terminus, the 544-residue chain is Chitin-inducible gibberellin-responsive protein 2 (544 aa).

Residues 1 to 123 (MADTPTSRMI…VGASCVTEDP (123 aa)) form a disordered region. Composition is skewed to polar residues over residues 15-30 (NIPS…SDNP), 63-74 (SQATPNKYTLDS), and 86-101 (PSSQ…PLSQ). Positions 165–544 (RMMGIPRGNL…RPLVVSSAWH (380 aa)) constitute a GRAS domain. The tract at residues 172 to 232 (GNLKELLIAC…VARLASSGIS (61 aa)) is leucine repeat I (LRI). The interval 251–316 (MHFLYEACPY…GGPPTVRITG (66 aa)) is VHIID. A VHIID motif is present at residues 282-286 (IHIID). The leucine repeat II (LRII) stretch occupies residues 332–364 (LVGRRLSHIASLCKVPFEFHPLAISGSKVEAAH). The interval 373–467 (LAVNFTLELH…QHCLAREIVN (95 aa)) is PFYRE. The segment at 470–544 (ACEGEERAER…RPLVVSSAWH (75 aa)) is SAW.

This sequence belongs to the GRAS family.

The protein resides in the nucleus. May play a regulatory role in the early step of oligosaccharide elicitor response, downstream of the membrane-associated high-affinity chitin-binding protein. This chain is Chitin-inducible gibberellin-responsive protein 2 (CIGR2), found in Oryza sativa subsp. japonica (Rice).